The chain runs to 76 residues: UPF0346 protein lhv_1069 (76 aa).

This sequence belongs to the UPF0346 family.

The polypeptide is UPF0346 protein lhv_1069 (Lactobacillus helveticus (strain DPC 4571)).